A 297-amino-acid chain; its full sequence is L-ribulose 3-epimerase (297 aa).

E147 (proton donor/acceptor) is an active-site residue. E147 is a binding site for Mn(2+). Residues E153 and 180–183 (DTFH) each bind substrate. D180 and H206 together coordinate Mn(2+). Residue R212 coordinates substrate. E241 serves as the catalytic Proton donor/acceptor. E241 is a binding site for Mn(2+).

The protein belongs to the hyi family. Homotetramer. The cofactor is Mn(2+).

It carries out the reaction L-ribulose = L-xylulose. The catalysed reaction is keto-D-tagatose = keto-D-sorbose. It catalyses the reaction D-allulose = keto-D-fructose. With respect to regulation, strongly inhibited by Co(2+) and Ni(2+), and slightly inhibited by EDTA. Its function is as follows. Catalyzes the epimerization of various ketoses at the C(3) position. It is able to interconvert L-ribulose with high efficiency. The enzyme can also accept other ketopentoses such as D-psicose and D-tagatose with lower efficiency. The polypeptide is L-ribulose 3-epimerase (Mesorhizobium japonicum (strain LMG 29417 / CECT 9101 / MAFF 303099) (Mesorhizobium loti (strain MAFF 303099))).